The sequence spans 576 residues: Laccase-1 (576 aa).

An N-terminal signal peptide occupies residues 1–19; it reads MARTTFLVSVSLFVSAVLA. Plastocyanin-like domains are found at residues 21-145 and 157-304; these read TVEY…LVIY and VDDE…LVYE. A glycan (N-linked (GlcNAc...) asparagine) is linked at N41. Residues H82, H84, H127, and H129 each coordinate Cu cation. A disulfide bridge connects residues C103 and C562. N-linked (GlcNAc...) asparagine glycans are attached at residues N182, N228, N294, and N368. The Plastocyanin-like 3 domain occupies 376–576; that stretch reads DESKLVPLEY…NWLKSNPGQL (201 aa). Residues H471, H474, H476, H523, C524, H525, and H529 each contribute to the Cu cation site.

The protein belongs to the multicopper oxidase family. In terms of assembly, homodimer. Requires Cu cation as cofactor. In mycelia, at a lower level than LCC4.

Its subcellular location is the secreted. It carries out the reaction 4 hydroquinone + O2 = 4 benzosemiquinone + 2 H2O. Lignin degradation and detoxification of lignin-derived products. The protein is Laccase-1 (LCC1) of Thanatephorus cucumeris (Black scurf of potato).